The following is a 773-amino-acid chain: Endonuclease MutS2 (773 aa).

Position 334–341 (334–341 (GANAGGKT)) interacts with ATP. The region spanning 698–773 (VDLRGMRADV…GDGMTMVTLK (76 aa)) is the Smr domain.

Belongs to the DNA mismatch repair MutS family. MutS2 subfamily. In terms of assembly, homodimer. Binds to stalled ribosomes, contacting rRNA.

Functionally, endonuclease that is involved in the suppression of homologous recombination and thus may have a key role in the control of bacterial genetic diversity. Its function is as follows. Acts as a ribosome collision sensor, splitting the ribosome into its 2 subunits. Detects stalled/collided 70S ribosomes which it binds and splits by an ATP-hydrolysis driven conformational change. Acts upstream of the ribosome quality control system (RQC), a ribosome-associated complex that mediates the extraction of incompletely synthesized nascent chains from stalled ribosomes and their subsequent degradation. Probably generates substrates for RQC. The polypeptide is Endonuclease MutS2 (Solidesulfovibrio magneticus (strain ATCC 700980 / DSM 13731 / RS-1) (Desulfovibrio magneticus)).